Here is a 356-residue protein sequence, read N- to C-terminus: Protein trichome birefringence-like 41 (356 aa).

The helical; Signal-anchor for type II membrane protein transmembrane segment at 12 to 31 (SALVLSLLLLLLLPLLHEAA) threads the bilayer. The GDS motif motif lies at 107–109 (GDS). Residues 333–347 (DCSHWCLSGVPDTWN) carry the DCXHWCLPGXXDXWN motif motif.

This sequence belongs to the PC-esterase family. TBL subfamily.

Its subcellular location is the membrane. Its function is as follows. May act as a bridging protein that binds pectin and other cell wall polysaccharides. Probably involved in maintaining esterification of pectins. May be involved in the specific O-acetylation of cell wall polymers. The chain is Protein trichome birefringence-like 41 (TBL41) from Arabidopsis thaliana (Mouse-ear cress).